The sequence spans 363 residues: Phospho-N-acetylmuramoyl-pentapeptide-transferase (363 aa).

The next 10 membrane-spanning stretches (helical) occupy residues 15–33 (FTTL…SFIF), 82–102 (NTPT…LLIV), 106–126 (FYSM…IIGF), 147–167 (FILQ…NGYI), 183–203 (IVIF…VNLT), 207–227 (DGLA…EIFI), 233–253 (LIIY…FLKF), 260–280 (IFMG…ISIL), 285–305 (FTLF…IIQV), and 341–361 (IVEN…VLKI).

The protein belongs to the glycosyltransferase 4 family. MraY subfamily. The cofactor is Mg(2+).

It localises to the cell inner membrane. The enzyme catalyses UDP-N-acetyl-alpha-D-muramoyl-L-alanyl-gamma-D-glutamyl-meso-2,6-diaminopimeloyl-D-alanyl-D-alanine + di-trans,octa-cis-undecaprenyl phosphate = di-trans,octa-cis-undecaprenyl diphospho-N-acetyl-alpha-D-muramoyl-L-alanyl-D-glutamyl-meso-2,6-diaminopimeloyl-D-alanyl-D-alanine + UMP. The protein operates within cell wall biogenesis; peptidoglycan biosynthesis. Catalyzes the initial step of the lipid cycle reactions in the biosynthesis of the cell wall peptidoglycan: transfers peptidoglycan precursor phospho-MurNAc-pentapeptide from UDP-MurNAc-pentapeptide onto the lipid carrier undecaprenyl phosphate, yielding undecaprenyl-pyrophosphoryl-MurNAc-pentapeptide, known as lipid I. The chain is Phospho-N-acetylmuramoyl-pentapeptide-transferase from Prochlorococcus marinus (strain MIT 9515).